We begin with the raw amino-acid sequence, 123 residues long: WAP four-disulfide core domain protein 5 (123 aa).

Positions 1–24 (MRIQSLLLLGALLAVGSQLPAVFG) are cleaved as a signal peptide. WAP domains are found at residues 27–73 (KGEK…CVPR) and 74–121 (VSVK…RDPA). Cystine bridges form between Cys-34-Cys-62, Cys-41-Cys-66, Cys-49-Cys-61, Cys-55-Cys-70, Cys-81-Cys-109, Cys-88-Cys-113, Cys-96-Cys-108, and Cys-102-Cys-117.

It localises to the secreted. Functionally, putative acid-stable proteinase inhibitor. This chain is WAP four-disulfide core domain protein 5 (WFDC5), found in Papio anubis (Olive baboon).